Reading from the N-terminus, the 218-residue chain is MRILCLHGMGTNSKVLEMQTSALRHQLSHSQSHKYEYVDGGEPMPPAPGIEAFIGQDESLAYYHPHSAKSILTAIDDLWEYIAEEGPFDGVLGFSQGASLAAMIIARAHHSDPPPFQFAIFFCAGLPYCEKSLSAGEVKFLRAEATQGPVIHVPTAHIFGKKDPDVSYSKAMTELCHPWGRVLLDHGAGHEIPRVPVETVDDMARAVEKVVTKAVIGQ.

Active-site charge relay system residues include serine 95, aspartate 163, and histidine 190.

Belongs to the LovG family.

The protein operates within secondary metabolite biosynthesis. Esterase; part of the gene cluster that mediates the biosynthesis of the gamma-pyrones fusapyrone (FPY) and deoxyfusapyrone (dFPY). FPY is an undecaketide and thus likely synthesized by the polyketide synthase FPY1 from acetyl-CoA functioning as starter unit and the addition of 10 malonyl-CoA extender units by successive Claisen-condensations. Next to this, FPY shares some rare features: C-glycosylated 4-deoxyglucose at C-3, a gem-dimethyl group at C-13, and an alpha-beta to beta-gamma double bond shift at C-20. During FPY biosynthesis mono-C-methyl groups are transferred to the tetra-, penta-, hexa- and heptaketide, while two C-methyl groups are transferred to the nonaketide, suggesting that the CMet domain is programmed to selectively catalyze two successive C-alpha-methylation reactions of the nonaketide, while other alpha-carbons are non- or mono-methylated only. While the origin of the 4'-deoxyglucose moiety remains opaque, its transfer to C-3 is most likely mediated by the C-glycosyltransferase FPY2. Next to this, the hydroxyl group present at C-33 and discriminating between FPY and dFPY, is likely to be installed by the cytochrome P450 monooxygenase FPY7. No putative function can be predicted for the remaining genes FPY3-FPY6. The sequence is that of Esterase FPY3 from Fusarium mangiferae (Mango malformation disease fungus).